Consider the following 316-residue polypeptide: L-lactate dehydrogenase 3 (316 aa).

NAD(+)-binding residues include Val-16, Asp-37, Arg-42, and Tyr-68. A substrate-binding site is contributed by Arg-91. Residues Ser-104, 121–123, and Thr-146 contribute to the NAD(+) site; that span reads ASN. 123–126 lines the substrate pocket; it reads NPVD. 151 to 154 contributes to the substrate binding site; it reads DSSR. The beta-D-fructose 1,6-bisphosphate site is built by Arg-156 and His-171. The Proton acceptor role is filled by His-178. Substrate is bound at residue Thr-233.

The protein belongs to the LDH/MDH superfamily. LDH family. As to quaternary structure, homotetramer.

It is found in the cytoplasm. It carries out the reaction (S)-lactate + NAD(+) = pyruvate + NADH + H(+). It functions in the pathway fermentation; pyruvate fermentation to lactate; (S)-lactate from pyruvate: step 1/1. Allosterically activated by fructose 1,6-bisphosphate (FBP). Its function is as follows. Catalyzes the conversion of lactate to pyruvate. The polypeptide is L-lactate dehydrogenase 3 (Bacillus cereus (strain ATCC 10987 / NRS 248)).